The primary structure comprises 406 residues: Dual-specificity RNA methyltransferase RlmN (406 aa).

Glu119 (proton acceptor) is an active-site residue. Residues Asp125 to Asp370 form the Radical SAM core domain. Cysteines 132 and 375 form a disulfide. Residues Cys139, Cys143, and Cys146 each contribute to the [4Fe-4S] cluster site. Residues Gly192–Glu193, Ser224, Ser246–His248, and Asn332 contribute to the S-adenosyl-L-methionine site. Cys375 (S-methylcysteine intermediate) is an active-site residue.

This sequence belongs to the radical SAM superfamily. RlmN family. [4Fe-4S] cluster is required as a cofactor.

Its subcellular location is the cytoplasm. The enzyme catalyses adenosine(2503) in 23S rRNA + 2 reduced [2Fe-2S]-[ferredoxin] + 2 S-adenosyl-L-methionine = 2-methyladenosine(2503) in 23S rRNA + 5'-deoxyadenosine + L-methionine + 2 oxidized [2Fe-2S]-[ferredoxin] + S-adenosyl-L-homocysteine. It catalyses the reaction adenosine(37) in tRNA + 2 reduced [2Fe-2S]-[ferredoxin] + 2 S-adenosyl-L-methionine = 2-methyladenosine(37) in tRNA + 5'-deoxyadenosine + L-methionine + 2 oxidized [2Fe-2S]-[ferredoxin] + S-adenosyl-L-homocysteine. In terms of biological role, specifically methylates position 2 of adenine 2503 in 23S rRNA and position 2 of adenine 37 in tRNAs. m2A2503 modification seems to play a crucial role in the proofreading step occurring at the peptidyl transferase center and thus would serve to optimize ribosomal fidelity. The protein is Dual-specificity RNA methyltransferase RlmN of Xylella fastidiosa (strain 9a5c).